A 462-amino-acid polypeptide reads, in one-letter code: MGKPWSDRFEVGLHPFIESFNASIKFDFLLLQEDLDGSIAHARMLGKTGIINADEASQLEKGLNQIRLEASQGVFNADQPAEDVHFAVENRLIELLGPLGKKLHTGRSRNDQIATDIRLWLRRKIDEINFDLENIQKILLGHAEKNLYTLIPGYTHLQRAQPVSLAHHLLAYLEMFQRDRDRLVEVKSRVNTSPLGAAALAGTSLPIDRLYTADQLNFTSIYSNSLDAVSDRDFAVEFIAASSLIMVHLSRLSEEIIFWSSEEFSFVKLTDRCATGSSIMPQKKNPDVPELVRGKSGRVFGHLQALLVMLKGLPLAYNKDFQEDKEALFDTVVTVRNSLQAMSILLEEGLEFSLDRLGSAVESDFSNATDVADYLVSKEVPFREAYQIVGRLVKLCMKEGILLKDLSFDQWQDMHPAFDQDIYKRLTPEHVVASRISQGGTGFAQVSAQLENWQNQFSSLKE.

The protein belongs to the lyase 1 family. Argininosuccinate lyase subfamily.

It is found in the cytoplasm. The catalysed reaction is 2-(N(omega)-L-arginino)succinate = fumarate + L-arginine. It participates in amino-acid biosynthesis; L-arginine biosynthesis; L-arginine from L-ornithine and carbamoyl phosphate: step 3/3. This Prochlorococcus marinus (strain MIT 9211) protein is Argininosuccinate lyase.